The chain runs to 501 residues: Dihydrolipoyl dehydrogenase, mitochondrial (501 aa).

The transit peptide at 1–31 (MAMANLARRKGYSLLSSETLRYSFSLRSRAF) directs the protein to the mitochondrion. FAD contacts are provided by residues 67–76 (EKRGALGGTC), K85, G149, and 178–180 (TGS). An intrachain disulfide couples C76 to C81. NAD(+) contacts are provided by residues 215–222 (GAGYIGLE), E238, V272, and G307. FAD is bound by residues D348 and 354 to 357 (MLAH). The active-site Proton acceptor is H480.

It belongs to the class-I pyridine nucleotide-disulfide oxidoreductase family. In terms of assembly, homodimer. Requires FAD as cofactor.

It is found in the mitochondrion matrix. The catalysed reaction is N(6)-[(R)-dihydrolipoyl]-L-lysyl-[protein] + NAD(+) = N(6)-[(R)-lipoyl]-L-lysyl-[protein] + NADH + H(+). Its function is as follows. Lipoamide dehydrogenase is a component of the glycine cleavage system as well as of the alpha-ketoacid dehydrogenase complexes. The pyruvate dehydrogenase complex contains multiple copies of three enzymatic components: pyruvate dehydrogenase (E1), dihydrolipoamide acetyltransferase (E2) and lipoamide dehydrogenase (E3). The sequence is that of Dihydrolipoyl dehydrogenase, mitochondrial (LPD) from Pisum sativum (Garden pea).